The sequence spans 512 residues: Cytochrome P450 monooxygenase FrzL (512 aa).

Residues 6-26 (TMLAFVPYLAVFVACYGLVYY) traverse the membrane as a helical segment. Cys-423 provides a ligand contact to heme.

The protein belongs to the cytochrome P450 family. Requires heme as cofactor.

The protein resides in the membrane. Its function is as follows. Cytochrome P450 monooxygenase; part of the gene cluster that mediates the biosynthesis of the alkaloid (-)-FR901483, a potent immunosuppressant that shows efficacy in animal models and a probable inhibitor of purine nucleotide biosynthesis by targeting phosphoribosylpyrophosphate amidotransferase (PPAT). The only unassigned enzyme in the cluster is the second cytochrome P450 monooxygenase FrzL. The biosynthesis of (-)-FR901483 starts with the condensation of two L-tyrosines to yield (S,S)-dityrosyl-piperazine. This process occurs in 3 steps with the non-canonical nonribosomal peptide synthetase FrzA catalyzing the reduction of L-tyrosine into L-tyrosinal, the spontaneous condensation of 2 L-tyrosinal units, and the subsequent reduction by the NmrA-like family domain-containing oxidoreductase FrzB. The cytochrome P450 monooxygenase FrzC then performs coupling between N10 and C1' to morph the piperazine into a 1,4-diazabicyclo[3.2.1]octane spiro-fused to a 2,5-cyclohexadienone. The dienone portion is further reduced to cyclohexanone by the flavin-dependent reductase FrzD. The methyltranserases (MTs) FrzE and FrzF are then involved in the methylation at the C10' amine and the C4 phenolic oxygen, respectively. The order of the two MTs appear to be interchangeable. Cleavage of the C9-N10' bond by the dioxygenase FrzG then leads to formation of a conjugated iminium. In addition to the oxidation of C9, an additional dehydrogenation between C7 and C8 can occur to give a likely shunt product. The next biosynthetic step is the intramolecular aldol condensation catalyzed by the newly identified aldolase FrzH to yield an aza-tricyclic product with the formation of a C9-C3' bond. The short-chain dehydrogenase/reductase FrzI then produces dephospho-(-)-FR901483 that is phosphorylated at C4'-OH into (-)-FR901483 by the phosphotransferase FrzJ. In Cladobotryum sp, this protein is Cytochrome P450 monooxygenase FrzL.